The chain runs to 554 residues: Glucose-6-phosphate isomerase 1 (554 aa).

Catalysis depends on E359, which acts as the Proton donor. Residues H390 and K518 contribute to the active site.

This sequence belongs to the GPI family.

It localises to the cytoplasm. It carries out the reaction alpha-D-glucose 6-phosphate = beta-D-fructose 6-phosphate. Its pathway is carbohydrate biosynthesis; gluconeogenesis. It participates in carbohydrate degradation; glycolysis; D-glyceraldehyde 3-phosphate and glycerone phosphate from D-glucose: step 2/4. In terms of biological role, catalyzes the reversible isomerization of glucose-6-phosphate to fructose-6-phosphate. The protein is Glucose-6-phosphate isomerase 1 of Pseudomonas putida (strain ATCC 47054 / DSM 6125 / CFBP 8728 / NCIMB 11950 / KT2440).